Consider the following 227-residue polypeptide: SPbeta prophage-derived uncharacterized membrane protein YomJ (227 aa).

2 helical membrane-spanning segments follow: residues 16–36 (LFFL…IVGL) and 131–151 (GIVA…GLSA).

It is found in the cell membrane. This is SPbeta prophage-derived uncharacterized membrane protein YomJ (yomJ) from Bacillus subtilis (strain 168).